Reading from the N-terminus, the 242-residue chain is NAD(P)H-quinone oxidoreductase subunit K (242 aa).

Residues cysteine 59, cysteine 60, cysteine 124, and cysteine 155 each coordinate [4Fe-4S] cluster.

The protein belongs to the complex I 20 kDa subunit family. NDH-1 can be composed of about 15 different subunits; different subcomplexes with different compositions have been identified which probably have different functions. [4Fe-4S] cluster serves as cofactor.

The protein resides in the cellular thylakoid membrane. The enzyme catalyses a plastoquinone + NADH + (n+1) H(+)(in) = a plastoquinol + NAD(+) + n H(+)(out). It carries out the reaction a plastoquinone + NADPH + (n+1) H(+)(in) = a plastoquinol + NADP(+) + n H(+)(out). Its function is as follows. NDH-1 shuttles electrons from an unknown electron donor, via FMN and iron-sulfur (Fe-S) centers, to quinones in the respiratory and/or the photosynthetic chain. The immediate electron acceptor for the enzyme in this species is believed to be plastoquinone. Couples the redox reaction to proton translocation, and thus conserves the redox energy in a proton gradient. Cyanobacterial NDH-1 also plays a role in inorganic carbon-concentration. This is NAD(P)H-quinone oxidoreductase subunit K from Synechococcus sp. (strain RCC307).